The sequence spans 256 residues: F-actin-capping protein subunit alpha (256 aa).

Residue Ser31 is modified to Phosphoserine.

Belongs to the F-actin-capping protein alpha subunit family. Component of the F-actin capping complex, composed of a heterodimer of an alpha and a beta subunit.

The protein resides in the cytoplasm. It is found in the cytoskeleton. The protein localises to the actin patch. Its function is as follows. F-actin-capping proteins bind in a Ca(2+)-independent manner to the fast growing ends of actin filaments (barbed end) thereby blocking the exchange of subunits at these ends. Unlike other capping proteins (such as gelsolin and severin), these proteins do not sever actin filaments. Competes with formin cdc12 for attachment to the actin filaments barbed ends. Slowly replaces cdc12 on the barbed ends in preparation for filament disassembly during contractile ring constriction. In Schizosaccharomyces pombe (strain 972 / ATCC 24843) (Fission yeast), this protein is F-actin-capping protein subunit alpha (acp1).